The following is a 384-amino-acid chain: S-adenosylmethionine synthase (384 aa).

Residue histidine 15 coordinates ATP. Aspartate 17 lines the Mg(2+) pocket. A K(+)-binding site is contributed by glutamate 43. Glutamate 56 and glutamine 99 together coordinate L-methionine. Residues 99 to 109 (QSPDINQGVDR) form a flexible loop region. Residues 164–166 (DAK), 230–231 (RF), aspartate 239, 245–246 (RK), alanine 262, and lysine 266 each bind ATP. Residue aspartate 239 coordinates L-methionine. Residue lysine 270 participates in L-methionine binding.

This sequence belongs to the AdoMet synthase family. Homotetramer; dimer of dimers. Mg(2+) serves as cofactor. K(+) is required as a cofactor.

Its subcellular location is the cytoplasm. The enzyme catalyses L-methionine + ATP + H2O = S-adenosyl-L-methionine + phosphate + diphosphate. The protein operates within amino-acid biosynthesis; S-adenosyl-L-methionine biosynthesis; S-adenosyl-L-methionine from L-methionine: step 1/1. In terms of biological role, catalyzes the formation of S-adenosylmethionine (AdoMet) from methionine and ATP. The overall synthetic reaction is composed of two sequential steps, AdoMet formation and the subsequent tripolyphosphate hydrolysis which occurs prior to release of AdoMet from the enzyme. The sequence is that of S-adenosylmethionine synthase from Escherichia coli (strain K12 / DH10B).